Consider the following 461-residue polypeptide: Probable tubulin polyglutamylase TTLL9 (461 aa).

The span at 1–10 (MSRQKSQTSK) shows a compositional bias: polar residues. Positions 1–20 (MSRQKSQTSKGHGASKGKER) are disordered. One can recognise a TTL domain in the interval 22 to 402 (QRTLIRFKTT…EARLTGKEKR (381 aa)). Residues Lys149 and 155–156 (QG) each bind ATP. An a protein-binding site is contributed by Gln155. A compositionally biased stretch (polar residues) spans 186-197 (QATRANVNPSGS). The tract at residues 186 to 208 (QATRANVNPSGSHDTRSSDDQKD) is disordered. The segment covering 198 to 208 (HDTRSSDDQKD) has biased composition (basic and acidic residues). ATP-binding positions include 218–221 (QRYV) and 231–233 (KFD). Arg257 lines the L-glutamate pocket. 276-277 (TN) contributes to the ATP binding site. Position 294 (Lys294) interacts with L-glutamate. Residues Asp348, Glu361, and Asn363 each contribute to the Mg(2+) site. Lys379 serves as a coordination point for L-glutamate.

The protein belongs to the tubulin--tyrosine ligase family. Mg(2+) is required as a cofactor.

The protein resides in the cytoplasm. Its subcellular location is the cytoskeleton. It localises to the cilium basal body. It is found in the flagellum axoneme. It catalyses the reaction (L-glutamyl)(n)-gamma-L-glutamyl-L-glutamyl-[protein] + L-glutamate + ATP = (L-glutamyl)(n+1)-gamma-L-glutamyl-L-glutamyl-[protein] + ADP + phosphate + H(+). Functionally, probable tubulin polyglutamylase that generates side chains of glutamate on the gamma-carboxyl group of specific glutamate residues within the C-terminal tail of target proteins. Similar to TTLL1, may acquire enzymatic activity only in complex with other proteins as it is most likely lacking domains important for autonomous activity. Mediates tubulin polyglutamylation which induces establishment of microtubule heterogeneity in sperm flagella, thereby playing a role in normal motile flagella axoneme structure and sperm flagella beating pattern. The protein is Probable tubulin polyglutamylase TTLL9 (Ttll9) of Rattus norvegicus (Rat).